Here is a 460-residue protein sequence, read N- to C-terminus: Cysteine--tRNA ligase (460 aa).

Cysteine 28 provides a ligand contact to Zn(2+). The short motif at 30–40 (VTIYDLCHIGH) is the 'HIGH' region element. The Zn(2+) site is built by cysteine 209, histidine 234, and glutamate 238. The 'KMSKS' region signature appears at 266–270 (KMSKS). Lysine 269 contributes to the ATP binding site.

This sequence belongs to the class-I aminoacyl-tRNA synthetase family. Monomer. Requires Zn(2+) as cofactor.

It localises to the cytoplasm. The enzyme catalyses tRNA(Cys) + L-cysteine + ATP = L-cysteinyl-tRNA(Cys) + AMP + diphosphate. The chain is Cysteine--tRNA ligase from Vibrio vulnificus (strain YJ016).